A 154-amino-acid polypeptide reads, in one-letter code: Large ribosomal subunit protein uL13 (154 aa).

This sequence belongs to the universal ribosomal protein uL13 family. In terms of assembly, part of the 50S ribosomal subunit.

Its function is as follows. This protein is one of the early assembly proteins of the 50S ribosomal subunit, although it is not seen to bind rRNA by itself. It is important during the early stages of 50S assembly. The protein is Large ribosomal subunit protein uL13 of Borrelia garinii subsp. bavariensis (strain ATCC BAA-2496 / DSM 23469 / PBi) (Borreliella bavariensis).